The chain runs to 78 residues: Pigment-dispersing hormone 2 peptides (78 aa).

Residues methionine 1–glycine 21 form the signal peptide. The residue at position 75 (alanine 75) is an Alanine amide.

Belongs to the arthropod PDH family. Eyestalk sinus gland.

The protein localises to the secreted. Functionally, the pigment-dispersing hormone causes the migration of the distal retinal pigment into the proximal end of the pigment chromatophore cells and thus decreases the amount of light entering the retinulas. May also function as a neurotransmitter and/or neuromodulator. The chain is Pigment-dispersing hormone 2 peptides (PDH2) from Callinectes sapidus (Blue crab).